A 222-amino-acid chain; its full sequence is Triosephosphate isomerase (222 aa).

A substrate-binding site is contributed by 10–12 (NCK). His93 acts as the Electrophile in catalysis. The active-site Proton acceptor is the Glu141. Residues Ile146, Gly180, and 201 to 202 (AS) each bind substrate.

It belongs to the triosephosphate isomerase family. Homotetramer; dimer of dimers.

It is found in the cytoplasm. It catalyses the reaction D-glyceraldehyde 3-phosphate = dihydroxyacetone phosphate. It participates in carbohydrate biosynthesis; gluconeogenesis. The protein operates within carbohydrate degradation; glycolysis; D-glyceraldehyde 3-phosphate from glycerone phosphate: step 1/1. Its function is as follows. Involved in the gluconeogenesis. Catalyzes stereospecifically the conversion of dihydroxyacetone phosphate (DHAP) to D-glyceraldehyde-3-phosphate (G3P). The chain is Triosephosphate isomerase from Cenarchaeum symbiosum (strain A).